A 609-amino-acid polypeptide reads, in one-letter code: Protein alan shepard (609 aa).

The segment covering 1–12 has biased composition (pro residues); it reads MHPRYSPAPPPL. The tract at residues 1-96 is disordered; the sequence is MHPRYSPAPP…ASVAAAPPTP (96 aa). Phosphotyrosine is present on Tyr-5. Residues 13–35 show a composition bias toward low complexity; that stretch reads HQQQQQQPPQQQQQQMGGPHQQQ. Positions 37–50 are enriched in gly residues; the sequence is GGVGPGTGHGGVGA. 2 stretches are compositionally biased toward low complexity: residues 51–68 and 83–92; these read AVGA…NSQQ and SSSAASVAAA. Tyr-152 and Tyr-168 each carry phosphotyrosine. Residues 190–252 are disordered; sequence PATTTYGQRV…AQNQNQQGGE (63 aa). Low complexity predominate over residues 204-252; that stretch reads SPSNTNSSSSSNTGSQSGTLSTSLSNTTNTNTTMGPNGTAQNQNQQGGE. 2 consecutive RRM domains span residues 257–330 and 336–415; these read TNLY…MAKQ and TNLY…FADG. The disordered stretch occupies residues 583–609; that stretch reads MTDSEQASTAASPDEAYTQYPHQAAPK.

Its function is as follows. Has a role in the perception of gravity. This is Protein alan shepard from Drosophila grimshawi (Hawaiian fruit fly).